We begin with the raw amino-acid sequence, 202 residues long: Protein-methionine-sulfoxide reductase heme-binding subunit MsrQ (202 aa).

The next 6 membrane-spanning stretches (helical) occupy residues 8 to 28 (LAVF…AWIF), 42 to 62 (LGLG…LQKL), 75 to 95 (LGLW…VFIL), 110 to 130 (PYII…ITSN), 147 to 167 (LVYL…RADL), and 169 to 189 (EWTL…PSIA).

It belongs to the MsrQ family. Heterodimer of a catalytic subunit (MsrP) and a heme-binding subunit (MsrQ). The cofactor is FMN. It depends on heme b as a cofactor.

The protein localises to the cell inner membrane. Its function is as follows. Part of the MsrPQ system that repairs oxidized periplasmic proteins containing methionine sulfoxide residues (Met-O), using respiratory chain electrons. Thus protects these proteins from oxidative-stress damage caused by reactive species of oxygen and chlorine generated by the host defense mechanisms. MsrPQ is essential for the maintenance of envelope integrity under bleach stress, rescuing a wide series of structurally unrelated periplasmic proteins from methionine oxidation. MsrQ provides electrons for reduction to the reductase catalytic subunit MsrP, using the quinone pool of the respiratory chain. The sequence is that of Protein-methionine-sulfoxide reductase heme-binding subunit MsrQ from Pseudomonas aeruginosa (strain ATCC 15692 / DSM 22644 / CIP 104116 / JCM 14847 / LMG 12228 / 1C / PRS 101 / PAO1).